A 209-amino-acid polypeptide reads, in one-letter code: Transcription elongation factor A protein-like 4 (209 aa).

N-acetylmethionine is present on Met-1. A disordered region spans residues 1–125 (MEKLYNENEG…VPRKAKRKTN (125 aa)). Positions 25 to 96 (QDERKPEVAC…GSEREGKPES (72 aa)) are enriched in basic and acidic residues. A phosphoserine mark is found at Ser-88 and Ser-96.

Belongs to the TFS-II family. TFA subfamily.

The protein localises to the nucleus. In terms of biological role, may be involved in transcriptional regulation. This chain is Transcription elongation factor A protein-like 4 (TCEAL4), found in Pongo abelii (Sumatran orangutan).